Reading from the N-terminus, the 218-residue chain is Protein THO1 (218 aa).

The region spanning Tyr4–Asp38 is the SAP domain. Position 22 is a phosphoserine (Ser22). Disordered regions lie at residues Asp37–Glu123 and Leu177–Arg218. The span at Val47–Gly57 shows a compositional bias: polar residues. Ser58 and Ser68 each carry phosphoserine. Positions Thr72 to Lys96 are enriched in basic and acidic residues. Composition is skewed to low complexity over residues Ser102–Pro122 and Ser186–Ser203. A compositionally biased stretch (basic residues) spans Arg204–Arg218.

The protein belongs to the SAP domain-containing ribonucleoprotein family. As to quaternary structure, interacts with SUB2 in the presence of RNA; this interaction facilitates RNA binding of SUB2.

Its function is as follows. Facilitates RNA binding of SUB2 and likely plays a role in mRNA export. Suppressor of the transcriptional defect of HPR1 by overexpression. This is Protein THO1 (THO1) from Saccharomyces cerevisiae (strain ATCC 204508 / S288c) (Baker's yeast).